The following is a 141-amino-acid chain: Hemoglobin subunit alpha (141 aa).

The region spanning 1–141 is the Globin domain; it reads VLSANDKANV…VSTVLTSKYR (141 aa). S3 is subject to Phosphoserine. N6-succinyllysine is present on residues K7 and K11. K16 is modified (N6-acetyllysine; alternate). K16 is subject to N6-succinyllysine; alternate. At Y24 the chain carries Phosphotyrosine. S35 carries the post-translational modification Phosphoserine. The residue at position 40 (K40) is an N6-succinyllysine. S49 is subject to Phosphoserine. Residue H58 coordinates O2. H87 serves as a coordination point for heme b. At S102 the chain carries Phosphoserine. T108 is subject to Phosphothreonine. Phosphoserine occurs at positions 124 and 131. T134 and T137 each carry phosphothreonine. S138 bears the Phosphoserine mark.

It belongs to the globin family. As to quaternary structure, heterotetramer of two alpha chains and two beta chains. As to expression, red blood cells.

Functionally, involved in oxygen transport from the lung to the various peripheral tissues. Hemopressin acts as an antagonist peptide of the cannabinoid receptor CNR1. Hemopressin-binding efficiently blocks cannabinoid receptor CNR1 and subsequent signaling. This chain is Hemoglobin subunit alpha (HBA), found in Suncus murinus (Asian house shrew).